Reading from the N-terminus, the 723-residue chain is Ribosome quality control complex subunit 1 (723 aa).

Positions 21-125 are disordered; it reads SNSNANKMTS…DKGSDDDDDD (105 aa). Residues 27 to 37 are compositionally biased toward polar residues; sequence KMTSGKSTAGN. Residues 93–108 show a composition bias toward basic residues; sequence SSRRKKNKKAKRKQKN. The span at 109 to 118 shows a compositional bias: basic and acidic residues; that stretch reads HTAEAAKDKG. Ser119 carries the post-translational modification Phosphoserine. Thr158 is modified (phosphothreonine). A Phosphoserine modification is found at Ser160.

This sequence belongs to the TCF25 family. In terms of assembly, component of the ribosome quality control complex (RQC), composed of the E3 ubiquitin ligase RKR1/LTN1, RQC1 and RQC2, as well as CDC48 and its ubiquitin-binding cofactors. RQC forms a stable complex with 60S ribosomal subunits.

The protein localises to the cytoplasm. Functionally, component of the ribosome quality control complex (RQC), a ribosome-associated complex that mediates ubiquitination and extraction of incompletely synthesized nascent chains for proteasomal degradation. Within the RQC complex, RQC1 is essential for the recruitment of CDC48 to incompletely synthesized nascent polypeptides that are ubiquitinated by RKR1/LTN1. The protein is Ribosome quality control complex subunit 1 of Saccharomyces cerevisiae (strain ATCC 204508 / S288c) (Baker's yeast).